Consider the following 150-residue polypeptide: Stage V sporulation protein AC (150 aa).

The next 4 helical transmembrane spans lie at 30 to 50, 57 to 77, 84 to 104, and 121 to 141; these read LVGG…IHFF, AGNP…GFGI, FAGA…ASAA, and FKLA…VGMI.

Its subcellular location is the cell membrane. The sequence is that of Stage V sporulation protein AC (spoVAC) from Bacillus subtilis (strain 168).